Consider the following 259-residue polypeptide: Undecaprenyl-diphosphatase 4 (259 aa).

The next 8 helical transmembrane spans lie at 1–21 (MNWL…FLPI), 39–59 (AGLF…FIYY), 71–91 (FSKL…IGLL), 99–119 (ISKT…FLYM), 133–153 (ITYK…FPAI), 174–194 (AYFS…LQFV), 208–228 (SLIV…SWMI), and 239–259 (FAYY…TDVF).

Belongs to the UppP family.

Its subcellular location is the cell membrane. The enzyme catalyses di-trans,octa-cis-undecaprenyl diphosphate + H2O = di-trans,octa-cis-undecaprenyl phosphate + phosphate + H(+). In terms of biological role, catalyzes the dephosphorylation of undecaprenyl diphosphate (UPP). Confers resistance to bacitracin. This Bacillus cereus (strain ZK / E33L) protein is Undecaprenyl-diphosphatase 4.